The sequence spans 530 residues: Arginine--tRNA ligase (530 aa).

A 'HIGH' region motif is present at residues 113–123 (ANPTGPLHIGH).

The protein belongs to the class-I aminoacyl-tRNA synthetase family. In terms of assembly, monomer.

The protein localises to the cytoplasm. It carries out the reaction tRNA(Arg) + L-arginine + ATP = L-arginyl-tRNA(Arg) + AMP + diphosphate. The polypeptide is Arginine--tRNA ligase (Campylobacter jejuni subsp. jejuni serotype O:2 (strain ATCC 700819 / NCTC 11168)).